We begin with the raw amino-acid sequence, 124 residues long: CBS domain-containing protein MJ0729 (124 aa).

CBS domains are found at residues 10–67 and 70–124; these read MNKD…IEDL and LIDE…YKNR.

As to quaternary structure, exhibits a pH-dependent oligomerization state: at pH 7, the dominant species is a dimer, where each monomer is a two-CBS domain protein, and at pH 4.5-4.8, the dominant species is a tetramer, with an oblong shape. At pH 2.5, there is formation of intermolecular hydrogen bonds, suggesting the presence of high-molecular weight species. The physiological dimeric species is thermal and chemically very stable.

This chain is CBS domain-containing protein MJ0729, found in Methanocaldococcus jannaschii (strain ATCC 43067 / DSM 2661 / JAL-1 / JCM 10045 / NBRC 100440) (Methanococcus jannaschii).